A 207-amino-acid polypeptide reads, in one-letter code: Guanylate kinase (207 aa).

Residues 4 to 184 form the Guanylate kinase-like domain; the sequence is GTLYIVSAPS…ALMDFKAIIR (181 aa). 11-18 is a binding site for ATP; it reads APSGAGKS.

This sequence belongs to the guanylate kinase family.

Its subcellular location is the cytoplasm. It carries out the reaction GMP + ATP = GDP + ADP. The catalysed reaction is dZMP + ATP = dZDP + ADP. The protein operates within purine metabolism. Functionally, essential for recycling GMP and indirectly, cGMP. (Microbial infection) Catalyzes the phosphorylation of dZMP to dZDP, when the bacterium is infected by a phage that produces the substrate for the synthesis of dZTP (2- amino-2'-deoxyadenosine 5'-triphosphate), which is then used by the phage as a DNA polymerase substrate. The sequence is that of Guanylate kinase (gmk) from Vibrio cholerae serotype O1 (strain ATCC 39315 / El Tor Inaba N16961).